A 236-amino-acid chain; its full sequence is UPF0257 lipoprotein YnfC (236 aa).

The first 16 residues, Met1–Gly16, serve as a signal peptide directing secretion. Cys17 is lipidated: N-palmitoyl cysteine. Cys17 carries the S-diacylglycerol cysteine lipid modification.

The protein belongs to the UPF0257 family.

The protein localises to the cell membrane. The chain is UPF0257 lipoprotein YnfC from Escherichia coli O157:H7.